The chain runs to 674 residues: Kinesin-like protein KIFC1 (674 aa).

Phosphoserine is present on residues Ser-28, Ser-33, and Ser-35. The tract at residues 66 to 96 is disordered; that stretch reads TSRPRGPLLSTVSQTQGHTAAQKGPKKTGPR. Residues 75 to 84 show a composition bias toward polar residues; it reads STVSQTQGHT. Positions 146–315 form a coiled coil; the sequence is DLNEELKRYR…QELKGNIRVF (170 aa). In terms of domain architecture, Kinesin motor spans 311 to 664; it reads NIRVFCRVRP…LRFASKVNQC (354 aa). The segment at 327-366 is disordered; it reads TPSPGFLVFPPGPAGPSDPPTGLSLSRSDDRRSTLTGAPA. Over residues 336 to 345 the composition is skewed to pro residues; sequence PPGPAGPSDP. Phosphothreonine is present on Thr-360. Position 411–418 (411–418) interacts with ATP; it reads GQTGSGKT.

The protein belongs to the TRAFAC class myosin-kinesin ATPase superfamily. Kinesin family. NCD subfamily. Binds NUBP1 and NUBP2. Interacts with PPP1R42. As to expression, highly expressed in 14 dpc embryos, spleen and NIH3T3 cells. Also expressed in testis, brain, lung, kidney and cultured astrocytes. Very low levels in skeletal muscle and heart.

The protein resides in the nucleus. The protein localises to the cytoplasm. It is found in the cytoskeleton. Its subcellular location is the microtubule organizing center. It localises to the centrosome. The protein resides in the spindle. The protein localises to the early endosome. Its function is as follows. Minus end-directed microtubule-dependent motor required for bipolar spindle formation. May contribute to movement of early endocytic vesicles. Regulates cilium formation and structure. This chain is Kinesin-like protein KIFC1, found in Mus musculus (Mouse).